The chain runs to 451 residues: Zinc metalloproteinase nas-16 (451 aa).

The Peptidase M12A domain occupies 70–273; the sequence is QVVTKLFSPQ…LTINTAYNCK (204 aa). Intrachain disulfides connect Cys127/Cys272, Cys148/Cys167, Cys274/Cys291, and Cys296/Cys305. Residue Asn133 is glycosylated (N-linked (GlcNAc...) asparagine). His175 contributes to the Zn(2+) binding site. Glu176 is a catalytic residue. Residues His179 and His185 each coordinate Zn(2+). The EGF-like domain maps to 267 to 306; the sequence is NTAYNCKCPSELLCANGGYTNPSNCLECICPLGYGGVLCD. N-linked (GlcNAc...) asparagine glycosylation is found at Asn363 and Asn438.

Zn(2+) serves as cofactor.

The protein localises to the secreted. Functionally, metalloprotease. This chain is Zinc metalloproteinase nas-16 (nas-16), found in Caenorhabditis elegans.